Consider the following 113-residue polypeptide: Dolichyl-diphosphooligosaccharide--protein glycosyltransferase subunit DAD1 (113 aa).

Topologically, residues 1-30 are cytoplasmic; the sequence is MGSSAFEVLTFFLKDYKANTPQKLKIIDAY. A helical transmembrane segment spans residues 31-51; sequence LLYILLTGINQFLYCCLVGTF. Residue Pro-52 is a topological domain, lumenal. The chain crosses the membrane as a helical span at residues 53–73; the sequence is FNSFLSGFISCVASFVLGVCL. Residues 74–92 are Cytoplasmic-facing; sequence RLQVNPQNSSNFCGIPPER. The helical transmembrane segment at 93–113 threads the bilayer; the sequence is AFADFIFAHVVLHLVVMNFIG.

It belongs to the DAD/OST2 family. As to quaternary structure, component of the oligosaccharyltransferase (OST) complex. As to expression, widely expressed. Greatest expression seen in the epidermis, intermediate expression in the fat body and midgut and mild expression observed in the silk gland.

The protein localises to the endoplasmic reticulum membrane. It participates in protein modification; protein glycosylation. Subunit of the oligosaccharyl transferase (OST) complex that catalyzes the initial transfer of a defined glycan (Glc(3)Man(9)GlcNAc(2) in eukaryotes) from the lipid carrier dolichol-pyrophosphate to an asparagine residue within an Asn-X-Ser/Thr consensus motif in nascent polypeptide chains, the first step in protein N-glycosylation. N-glycosylation occurs cotranslationally and the complex associates with the Sec61 complex at the channel-forming translocon complex that mediates protein translocation across the endoplasmic reticulum (ER). All subunits are required for a maximal enzyme activity. The chain is Dolichyl-diphosphooligosaccharide--protein glycosyltransferase subunit DAD1 from Araneus ventricosus (Orbweaver spider).